A 1557-amino-acid chain; its full sequence is Probable kinase PglW (1557 aa).

An NERD domain is found at 12–130 (SEFEHERRGL…VAEAVCFTDN (119 aa)). 2 Protein kinase domains span residues 195 to 490 (ELER…LEVV) and 530 to 816 (WEVR…KVFL). ATP is bound by residues 536–544 (LGTGSTSRA) and Lys-564. Disordered stretches follow at residues 615–634 (DERD…RRRE) and 821–861 (TVPS…QRDR). Positions 830–849 (PAAPADGAAPAEGAAAGIAD) are enriched in low complexity.

This sequence belongs to the protein kinase superfamily. Ser/Thr protein kinase family.

Its function is as follows. BREX systems (bacteriophage exclusion) provide immunity against bacteriophage. Part of a type 2 BREX system. Previously called the phage growth limitation (Pgl) system, it confers protection against bacteriophage phiC31. The bacteria allows one cycle of phage infection, but subsequent cycles are impaired, protecting the original bacterial colony. The system undergoes high rates (10(-3) to 10(-4)) of phase reversion, i.e. loss and regain of phiC31 resistance. When the pglW-pglX-pglY-pglZ genes are transformed into a susceptible S.lividans (strain 1326) they confer resistance to infection by phage phiC31 and phiBT1; all 4 genes are necessary. The proteins has kinase domains and might bind DNA. In terms of biological role, autophosphorylates when synthesized in vitro, cannot be expressed in E.coli. The chain is Probable kinase PglW from Streptomyces coelicolor (strain ATCC BAA-471 / A3(2) / M145).